Consider the following 384-residue polypeptide: Carbamoyl phosphate synthase small chain (384 aa).

Residues 1 to 192 (MIKKIPAILV…LADRNREKIY (192 aa)) are CPSase. Positions 51, 244, and 246 each coordinate L-glutamine. Residues 196–382 (KVIVIDFGVK…IEIMKQFRKE (187 aa)) form the Glutamine amidotransferase type-1 domain. Residue Cys272 is the Nucleophile of the active site. The L-glutamine site is built by Met273, Gln276, Asn312, Gly314, and Phe315. Residues His355 and Glu357 contribute to the active site.

It belongs to the CarA family. Composed of two chains; the small (or glutamine) chain promotes the hydrolysis of glutamine to ammonia, which is used by the large (or ammonia) chain to synthesize carbamoyl phosphate. Tetramer of heterodimers (alpha,beta)4.

The protein localises to the plastid. The protein resides in the chloroplast. The enzyme catalyses hydrogencarbonate + L-glutamine + 2 ATP + H2O = carbamoyl phosphate + L-glutamate + 2 ADP + phosphate + 2 H(+). It catalyses the reaction L-glutamine + H2O = L-glutamate + NH4(+). The protein operates within amino-acid biosynthesis; L-arginine biosynthesis; carbamoyl phosphate from bicarbonate: step 1/1. It functions in the pathway pyrimidine metabolism; UMP biosynthesis via de novo pathway; (S)-dihydroorotate from bicarbonate: step 1/3. Functionally, small subunit of the glutamine-dependent carbamoyl phosphate synthetase (CPSase). CPSase catalyzes the formation of carbamoyl phosphate from the ammonia moiety of glutamine, carbonate, and phosphate donated by ATP, constituting the first step of 2 biosynthetic pathways, one leading to arginine and/or urea and the other to pyrimidine nucleotides. The small subunit (glutamine amidotransferase) binds and cleaves glutamine to supply the large subunit with the substrate ammonia. This chain is Carbamoyl phosphate synthase small chain, found in Porphyra purpurea (Red seaweed).